We begin with the raw amino-acid sequence, 316 residues long: Acetyl-coenzyme A carboxylase carboxyl transferase subunit alpha (316 aa).

Residues 36–290 (LLEERLARLR…KEALLKALEE (255 aa)) enclose the CoA carboxyltransferase C-terminal domain.

It belongs to the AccA family. As to quaternary structure, acetyl-CoA carboxylase is a heterohexamer composed of biotin carboxyl carrier protein (AccB), biotin carboxylase (AccC) and two subunits each of ACCase subunit alpha (AccA) and ACCase subunit beta (AccD).

The protein resides in the cytoplasm. It catalyses the reaction N(6)-carboxybiotinyl-L-lysyl-[protein] + acetyl-CoA = N(6)-biotinyl-L-lysyl-[protein] + malonyl-CoA. It functions in the pathway lipid metabolism; malonyl-CoA biosynthesis; malonyl-CoA from acetyl-CoA: step 1/1. Its function is as follows. Component of the acetyl coenzyme A carboxylase (ACC) complex. First, biotin carboxylase catalyzes the carboxylation of biotin on its carrier protein (BCCP) and then the CO(2) group is transferred by the carboxyltransferase to acetyl-CoA to form malonyl-CoA. This is Acetyl-coenzyme A carboxylase carboxyl transferase subunit alpha from Thermus thermophilus (strain ATCC 27634 / DSM 579 / HB8).